The chain runs to 310 residues: MLIDRFGRPVTNLRISLTKECNLSCFYCHREGQLDGERFMTPEEIERIVRVASRLGIKKVKLTGGEPTIRKDILEIIRRLKPYVVDLSLTTNGTTMYVLAEKLKEAGLDRVNISLDTLDRKKYKMITGFNVLDEVIKGIKKATKLFYPVKLNMVVMKGVNDDEIWDMMRFAGEVNAILQLIELEVPREMENSQFFKDFFYPLKPLEEKFEKLAVKVKERRMHRRRKYFIPIDGKIVEVEVVRSMHNTVFCMNCTRLRLTADGYLKTCLLRRDDLIDILGPLRNGASDADLIEIFKRAVLLRRPYWTSNSS.

Residues 5-232 (RFGRPVTNLR…RRRKYFIPID (228 aa)) form the Radical SAM core domain. Residue R14 coordinates GTP. [4Fe-4S] cluster-binding residues include C21 and C25. Y27 contributes to the S-adenosyl-L-methionine binding site. C28 lines the [4Fe-4S] cluster pocket. Residue K61 coordinates GTP. G65 is a binding site for S-adenosyl-L-methionine. A GTP-binding site is contributed by T90. S114 serves as a coordination point for S-adenosyl-L-methionine. K150 lines the GTP pocket. An S-adenosyl-L-methionine-binding site is contributed by M189. The [4Fe-4S] cluster site is built by C250 and C253. Residue 255 to 257 (RLR) participates in GTP binding. A [4Fe-4S] cluster-binding site is contributed by C267.

The protein belongs to the radical SAM superfamily. MoaA family. The cofactor is [4Fe-4S] cluster.

It catalyses the reaction GTP + AH2 + S-adenosyl-L-methionine = (8S)-3',8-cyclo-7,8-dihydroguanosine 5'-triphosphate + 5'-deoxyadenosine + L-methionine + A + H(+). It functions in the pathway cofactor biosynthesis; molybdopterin biosynthesis. Catalyzes the cyclization of GTP to (8S)-3',8-cyclo-7,8-dihydroguanosine 5'-triphosphate. This Pyrococcus horikoshii (strain ATCC 700860 / DSM 12428 / JCM 9974 / NBRC 100139 / OT-3) protein is Probable GTP 3',8-cyclase.